Here is a 119-residue protein sequence, read N- to C-terminus: Putative yippee-like protein Os10g0369500 (119 aa).

The Yippee domain maps to 21-118 (AVLKCRRCRV…LEKARMWKEA (98 aa)). 4 residues coordinate Zn(2+): Cys-25, Cys-28, Cys-81, and Cys-84.

The protein belongs to the yippee family.

This chain is Putative yippee-like protein Os10g0369500, found in Oryza sativa subsp. japonica (Rice).